A 156-amino-acid polypeptide reads, in one-letter code: Large ribosomal subunit protein uL15 (156 aa).

Residues 1–11 are compositionally biased toward basic and acidic residues; it reads MKLNDLRDKPG. Residues 1–44 form a disordered region; that stretch reads MKLNDLRDKPGSVKARKRVGRGIGSGTGKTGGRGVKGQKSRSGV. Residues 21–35 show a composition bias toward gly residues; the sequence is RGIGSGTGKTGGRGV.

Belongs to the universal ribosomal protein uL15 family. In terms of assembly, part of the 50S ribosomal subunit.

Functionally, binds to the 23S rRNA. This chain is Large ribosomal subunit protein uL15, found in Brucella abortus (strain S19).